Here is a 291-residue protein sequence, read N- to C-terminus: Nucleotide-binding protein Ccel_2290 (291 aa).

Residue 8–15 (GMSGAGKS) coordinates ATP. GTP is bound at residue 59–62 (DIRG).

The protein belongs to the RapZ-like family.

Functionally, displays ATPase and GTPase activities. The chain is Nucleotide-binding protein Ccel_2290 from Ruminiclostridium cellulolyticum (strain ATCC 35319 / DSM 5812 / JCM 6584 / H10) (Clostridium cellulolyticum).